A 607-amino-acid chain; its full sequence is Branchpoint-bridging protein (607 aa).

Composition is skewed to polar residues over residues 1 to 15 (MSWR…NNIP) and 35 to 45 (VTPSAPSSVTN). 2 disordered regions span residues 1-92 (MSWR…TENK) and 134-155 (VPAD…GRRV). A compositionally biased stretch (basic and acidic residues) spans 46–76 (GDRDRDRDGPVYSNDRDVKRGRSPERSEDGP). The KH domain maps to 201 to 281 (YVPVNDYPEI…EKVNKAKKLI (81 aa)). 2 CCHC-type zinc fingers span residues 319-336 (QACQ…DCPE) and 344-361 (IICR…DCPD). Disordered stretches follow at residues 363-390 (QRGA…GGDA) and 407-607 (AAPA…PPGA). Gly residues predominate over residues 373–389 (PGAGRTAGRIGSSGGGD). The span at 472–500 (ARDRNERRHDDRDRGDSYYGGDRRHDDYG) shows a compositional bias: basic and acidic residues. Over residues 521–533 (SAPAIPTAPAYPG) the composition is skewed to low complexity. Residues 534–545 (AYGGYPGYGAPP) are compositionally biased toward gly residues. Composition is skewed to pro residues over residues 550–563 (APPP…PGAP) and 581–607 (APPP…PPGA).

The protein belongs to the BBP/SF1 family.

The protein localises to the nucleus. In terms of biological role, necessary for the splicing of pre-mRNA. Has a role in the recognition of the branch site (5'-UACUAAC-3'), the pyrimidine tract and the 3'-splice site at the 3'-end of introns. The protein is Branchpoint-bridging protein (bbp-1) of Neurospora crassa (strain ATCC 24698 / 74-OR23-1A / CBS 708.71 / DSM 1257 / FGSC 987).